The primary structure comprises 347 residues: Bombesin receptor-activated protein C6orf89 (347 aa).

Residues 1 to 58 (MDLAANEISIYDKLSETVDLVRQTGHQCGMSEKAIEKFIRQLLEKNEPQRPPPQYPLL) are Cytoplasmic-facing. The chain crosses the membrane as a helical span at residues 59–79 (IVVYKVLATLGLILLTAYFVI). Over 80–347 (QPFSPLAPEP…ICDGTAFSEL (268 aa)) the chain is Extracellular.

As to quaternary structure, homodimer. Interacts with BRS3. Interacts (via N-terminus) with SIN3B. Glycosylated.

The protein resides in the golgi apparatus membrane. The protein localises to the midbody. It localises to the cytoplasm. It is found in the nucleus. Its subcellular location is the nucleolus. Its function is as follows. Exhibits histone deacetylase (HDAC) enhancer properties. May play a role in cell cycle progression and wound repair of bronchial epithelial cells. The polypeptide is Bombesin receptor-activated protein C6orf89 (C6orf89) (Homo sapiens (Human)).